Consider the following 436-residue polypeptide: Gustatory receptor for sugar taste 61a (436 aa).

The Cytoplasmic segment spans residues 1–78; sequence MSRTSDDIRK…PQDVKFKVRS (78 aa). Residues 79–99 form a helical membrane-spanning segment; that stretch reads IGLAVTGLFLLLGGMKTLVGA. The Extracellular segment spans residues 100-111; the sequence is NILFTEGLNAKN. A helical transmembrane segment spans residues 112 to 132; it reads IVGLVFLIVGMVNWLNFVGFA. At 133–164 the chain is on the cytoplasmic side; the sequence is RSWSHIMLPWSSVDILMLFPPYKRGKRSLRSK. The helical transmembrane segment at 165-185 threads the bilayer; the sequence is VNVLALSVVVLAVGDHMLYYA. Residues 186–214 lie on the Extracellular side of the membrane; the sequence is SGYCSYSMHILQCHTNHSRITFGLYLEKE. N-linked (GlcNAc...) asparagine glycosylation is present at asparagine 201. Residues 215-235 form a helical membrane-spanning segment; the sequence is FSDIMFIMPFNIFSMCYGFWL. The Cytoplasmic segment spans residues 236 to 237; it reads NG. The helical transmembrane segment at 238 to 258 threads the bilayer; that stretch reads AFTFLWNFMDIFIVMTSIGLA. The Extracellular portion of the chain corresponds to 259–304; that stretch reads QRFQQFAARVGALEGRHVPEALWYDIRRDHIRLCELASLVEASMSN. The helical transmembrane segment at 305–325 threads the bilayer; sequence IVFVSCANNVYVICNQALAIF. The Cytoplasmic portion of the chain corresponds to 326–334; the sequence is TKLRHPINY. Residues 335–355 traverse the membrane as a helical segment; it reads VYFWYSLIFLLARTSLVFMTA. Topologically, residues 356 to 436 are extracellular; sequence SKIHDASLLP…AKSHKGLRCA (81 aa).

This sequence belongs to the insect chemoreceptor superfamily. Gustatory receptor (GR) family. Gr5a subfamily. In terms of tissue distribution, expressed in sweet sensing neurons of classical chemosensory sensilla, but also in two supersensitive neurons of atypical taste sensilla.

The protein localises to the cell membrane. In terms of biological role, one of the few identified sugar gustatory receptors identified so far with glucose being its primary ligand and which mediates acceptance behavior. In Drosophila melanogaster (Fruit fly), this protein is Gustatory receptor for sugar taste 61a (Gr61a).